A 207-amino-acid polypeptide reads, in one-letter code: Serotonin N-acetyltransferase (207 aa).

Residue threonine 31 is modified to Phosphothreonine; by PKA. In terms of domain architecture, N-acetyltransferase spans 35 to 196 (NEFRCLTPKD…TFTEMHCSLR (162 aa)). Leucine 124 lines the substrate pocket. Acetyl-CoA-binding positions include 124–126 (LAV) and 132–137 (QQGKGS). Methionine 159 serves as a coordination point for substrate. Residue 168–170 (YQR) coordinates acetyl-CoA. A Phosphoserine modification is found at serine 205.

The protein belongs to the acetyltransferase family. AANAT subfamily. As to quaternary structure, monomer. Interacts with several 14-3-3 proteins, including YWHAB, YWHAE, YWHAG and YWHAZ, preferentially when phosphorylated at Thr-31. Phosphorylation on Ser-205 also allows binding to YWHAZ, but with lower affinity. The interaction with YWHAZ considerably increases affinity for arylalkylamines and acetyl-CoA and protects the enzyme from dephosphorylation and proteasomal degradation. It may also prevent thiol-dependent inactivation. In terms of processing, cAMP-dependent phosphorylation on both N-terminal Thr-31 and C-terminal Ser-205 regulates AANAT activity by promoting interaction with 14-3-3 proteins. As to expression, high levels in pineal gland and retina.

Its subcellular location is the cytoplasm. It carries out the reaction a 2-arylethylamine + acetyl-CoA = an N-acetyl-2-arylethylamine + CoA + H(+). The protein operates within aromatic compound metabolism; melatonin biosynthesis; melatonin from serotonin: step 1/2. In terms of biological role, controls the night/day rhythm of melatonin production in the pineal gland. Catalyzes the N-acetylation of serotonin into N-acetylserotonin, the penultimate step in the synthesis of melatonin. This is Serotonin N-acetyltransferase (AANAT) from Bos taurus (Bovine).